The chain runs to 1774 residues: MHSAATSTYPSGKTSPAPVGTPGTEYSEYEFSNDVAVVGMACRVAGGNHNPELLWQSLLSQKSAMGEIPPMRWEPYYRRDARNEKFLKNTTSRGYFLDRLEDFDCQFFGISPKEAEQMDPQQRVSLEVASEALEDAGIPAKSLSGSDTAVFWGVNSDDYSKLVLEDLPNVEAWMGIGTAYCGVPNRISYHLNLMGPSTAVDAACASSLVAIHHGVQAIRLGESKVAIVGGVNALCGPGLTRVLDKAGAISSDGSCKSFDDDAHGYARGEGAGALVLKSLHRALLDHDNVLAVIKGSAVCQDGKTNGIMAPNSVAQQLAANNALSAANIDPHTVRYVEAHATSTPLGDPTEISAIASVYGADRPADDPCYIGSIKPNIGHLEAGAGVMGFIKAVLAIQKGVLPPQANLTKLNSRIDWKTAGVKVVQEATPWPESDPIRRAGVCSYGYGGTVSHAVIEEFSPILQPDPLGNGAVSGPGLLLLSGPQEKRLALQAKTLRDWMTAEGKDHNLSDILTTLATRRDHHDYRAALVVDDYRDAEQVLQSLANGVDHTFTTQSRVLGSDISKDVVWVFSGHGAQWPDMGKQLIHNPVFFAAIQPLDELIQAEIGLSPIELLRTGDFESSDRVQILTYVMQIGLSALLQSNGITPQAVIGHSVGEIAASVVAGALSPAEGALIVTRRALLYRQVMGKGGMILVNLPSAETEEILGSRSDLVVAIDSSPSSCVVAGDKELVAETAEALKARGVKTFTVKSDIAFHSPTLNGLVDPLRDVLAETLSPVSPNVKLYSTALADPRGQDLRDVEYWAGNMVNRVRLTSAVKAAVEDGYRLFLEVSTHPVVSHSINETLMDAGMEDFAVIPTLLRKKPTEKHILHSIAQLHCRGAEVNWAAQMPGRWATGVPTTTWMHKPIWRKIETAPLHTGLTHDVEKHTLLGQRIPVPGTDTYVYTTRLDNDTKPFPGSHPLHGTEIVPAAGLINTFLKGTGGQMLQNVVLRVPVAINAPRSVQVVVQQDQVKVVSRLIPSEPSQLDDDASWVTHTTAYWDRKVAGSEDRIDFAAVKSRLVTKLADNFSIDYLDKVGVSAMGFPWAVTEHYRNDKEMLARVDVNPAISGDAPLPWDSSSWAPVLDAATSVGSTIFPTPALRMPAQIERVEVFTSQDPPKISWLYVQEASDSVPTSHVSVVSEAGEVLAKFTAMRFSEIEGTPGVSGSMESLVHQIAWPPATPAEEPLSIETVILVSPDATTRALYAASLPTRVNSFQFSSTQEFFSNASSLPLEKGTVVTYIPGEVASLAEVPAASESFTWNLLELIKFTVNGSLPIKVFTLTANIGEGQTPTALAQSPLYGLARVIASEHPDLGTLIDVEEPVIPLSTMRYIQGADIIRINDGIARTSRFRSLPRNKLLPASEGPRLLPRPEGTYLITGGLGVLGLEVADFLVEKGARRLLLISRRALPPRRTWDQVSEDLQPTIAKIRLLESRGASVHVLPLDITKPDAVEQLTTALDRLSLPSVQGVVHAAGVLDNELVMQTTRDAFNRVLAPKIAGALALHEVFPPKSVDFFVMFSSCGNLVGFTGQASYGSGNAFLDTLATHRARLGDAAVSFQWTSWRGLGMGASTDFINAELESKGITDVTRDEAFAAWQHLAKYDMDHGVVLRSRAFEDGEPIPVSILNDIAVRRVGTVSNTSPAAAGSSDAVPTSGPELKAYLDEKIRGCVAKVLQMTAEDVDSKAALADLGVDSVMTVTLRRQLQLTLKIAVPPTLTWSHPTVSHLAVWFAEKLAK.

Polar residues predominate over residues 1 to 14 (MHSAATSTYPSGKT). A disordered region spans residues 1–21 (MHSAATSTYPSGKTSPAPVGT). Positions 32–457 (SNDVAVVGMA…GTVSHAVIEE (426 aa)) constitute a Ketosynthase family 3 (KS3) domain. Residues 186 to 238 (RISYHLNLMGPSTAVDAACASSLVAIHHGVQAIRLGESKVAIVGGVNALCGPG) are acyltransferase. Residues cysteine 204, histidine 339, and histidine 379 each act as for beta-ketoacyl synthase activity in the active site. The interval 642–676 (NGITPQAVIGHSVGEIAASVVAGALSPAEGALIVT) is acetyl/malonyl transferases. Catalysis depends on serine 653, which acts as the For malonyltransferase activity. Residues 926-1045 (HTLLGQRIPV…AYWDRKVAGS (120 aa)) are N-terminal hotdog fold. The region spanning 926-1202 (HTLLGQRIPV…FSEIEGTPGV (277 aa)) is the PKS/mFAS DH domain. Histidine 958 (proton acceptor; for dehydratase activity) is an active-site residue. The interval 1059 to 1202 (VTKLADNFSI…FSEIEGTPGV (144 aa)) is C-terminal hotdog fold. The Proton donor; for dehydratase activity role is filled by aspartate 1123. Residues 1403 to 1450 (GPRLLPRPEGTYLITGGLGVLGLEVADFLVEKGARRLLLISRRALPPR) are 2-oxoacyl reductase. 1419-1424 (GLGVLG) lines the NADP(+) pocket. Residues 1698-1772 (AYLDEKIRGC…HLAVWFAEKL (75 aa)) enclose the Carrier domain. An O-(pantetheine 4'-phosphoryl)serine modification is found at serine 1732.

As to quaternary structure, homomultimer.

It carries out the reaction 3 malonyl-CoA + acetyl-CoA + NADPH + 3 H(+) = 6-methylsalicylate + 3 CO2 + NADP(+) + 4 CoA + H2O. The protein operates within mycotoxin biosynthesis; patulin biosynthesis. Functionally, this multifunctional enzyme is a polyketide synthase. It catalyzes a total of 11 steps by seven different component enzymes, in the biosynthesis of the antibiotic patulin. This chain is 6-methylsalicylic acid synthase, found in Penicillium patulum (Penicillium griseofulvum).